A 744-amino-acid chain; its full sequence is Palmitoyltransferase ZDHHC5-A (744 aa).

Residues 1–11 (MPSGSMSGGVS) show a composition bias toward gly residues. The tract at residues 1–25 (MPSGSMSGGVSGPTSPPHPTVPSRP) is disordered. The Cytoplasmic portion of the chain corresponds to 1–30 (MPSGSMSGGVSGPTSPPHPTVPSRPLRPSR). A helical transmembrane segment spans residues 31 to 51 (YVPVSAATAFLVGSTTLFFCF). Topologically, residues 52-61 (TCPWLSEQFS) are extracellular. The helical transmembrane segment at 62 to 82 (VAVPIYNGVMFMFVLANFCMA) threads the bilayer. Residues 83 to 167 (TFMDPGIFPR…IGRRNYRYFF (85 aa)) are Cytoplasmic-facing. A DHHC domain is found at 121–171 (KWCSTCRFYRPPRCSHCSVCDNCVEDFDHHCPWVNNCIGRRNYRYFFLFLL). Cys151 serves as the catalytic S-palmitoyl cysteine intermediate. A helical transmembrane segment spans residues 168–188 (LFLLSLTAHIMGVFGFGLLFI). The Extracellular portion of the chain corresponds to 189-208 (LYHTQQLDRVHSAVTMAVMC). The helical transmembrane segment at 209–229 (VAGLFFIPVAGLTGFHVVLVA) threads the bilayer. Over 230-744 (RGRTTNEQVT…VGGTTYEISV (515 aa)) the chain is Cytoplasmic. Disordered stretches follow at residues 314–523 (SLEM…PVVG), 556–645 (QHAV…SLSY), and 664–744 (SVAG…EISV). A compositionally biased stretch (polar residues) spans 369-393 (TYSSPGKNHTALTHAYANQSSQQPG). Positions 398 to 413 (PSLDGREGGGAERSGA) are enriched in basic and acidic residues. Gly residues predominate over residues 415-428 (RTGGGPGGPPGSGI). Residues 460–501 (THNAPPSEATTSTSYKSLANQTPPQAARNGSLSYDSLLTPSE) are compositionally biased toward polar residues. Residues 571-584 (PERERERLLHDSQA) are compositionally biased toward basic and acidic residues. Residues 585 to 601 (QHHHHHHHHHHHHRPPR) are compositionally biased toward basic residues. Low complexity-rich tracts occupy residues 621 to 630 (RTRSTDTTHP) and 689 to 723 (PKPS…SPAH). The segment covering 725–737 (PGGGVKKVTGVGG) has biased composition (gly residues).

The protein belongs to the DHHC palmitoyltransferase family. ERF2/ZDHHC9 subfamily.

The protein localises to the cell membrane. The catalysed reaction is L-cysteinyl-[protein] + hexadecanoyl-CoA = S-hexadecanoyl-L-cysteinyl-[protein] + CoA. Palmitoyltransferase that catalyzes the addition of palmitate onto various protein substrates and is involved in a variety of cellular processes. This Danio rerio (Zebrafish) protein is Palmitoyltransferase ZDHHC5-A.